The sequence spans 39 residues: Photosystem II reaction center protein L (39 aa).

Residues 18-38 (SLYLGLLIVFTTGILFSSYFF) form a helical membrane-spanning segment.

It belongs to the PsbL family. PSII is composed of 1 copy each of membrane proteins PsbA, PsbB, PsbC, PsbD, PsbE, PsbF, PsbH, PsbI, PsbJ, PsbK, PsbL, PsbM, PsbT, PsbX, PsbY, PsbZ, Psb30/Ycf12, peripheral proteins PsbO, CyanoQ (PsbQ), PsbU, PsbV and a large number of cofactors. It forms dimeric complexes.

It localises to the cellular thylakoid membrane. In terms of biological role, one of the components of the core complex of photosystem II (PSII). PSII is a light-driven water:plastoquinone oxidoreductase that uses light energy to abstract electrons from H(2)O, generating O(2) and a proton gradient subsequently used for ATP formation. It consists of a core antenna complex that captures photons, and an electron transfer chain that converts photonic excitation into a charge separation. This subunit is found at the monomer-monomer interface and is required for correct PSII assembly and/or dimerization. The protein is Photosystem II reaction center protein L of Synechococcus sp. (strain CC9311).